A 208-amino-acid polypeptide reads, in one-letter code: Thymidylate kinase (208 aa).

ATP is bound at residue 7 to 14; that stretch reads GIDGAGKT.

It belongs to the thymidylate kinase family.

It catalyses the reaction dTMP + ATP = dTDP + ADP. Its function is as follows. Phosphorylation of dTMP to form dTDP in both de novo and salvage pathways of dTTP synthesis. The polypeptide is Thymidylate kinase (Xylella fastidiosa (strain Temecula1 / ATCC 700964)).